The following is a 155-amino-acid chain: MGKSILLINGPNLNLLGTREPHVYGHTTLSDVESNSREIAASHGAVLESFQSNHEGAIVDRIQAARGKVDGIIINPGAYTHTSVAIRDALLSVDVPFIELHVSNVHAREPWRHHSYFSDKAAGIIVGLGVYGYKVAVEHVCVNFEEKEKGAKAAL.

The active-site Proton acceptor is the Tyr-24. 3 residues coordinate substrate: Asn-75, His-81, and Asp-88. The active-site Proton donor is His-101. Substrate contacts are provided by residues 102-103 (VS) and Arg-112.

Belongs to the type-II 3-dehydroquinase family. In terms of assembly, homododecamer. Adopts a ring-like structure, composed of an arrangement of two hexameric rings stacked on top of one another.

It catalyses the reaction 3-dehydroquinate = 3-dehydroshikimate + H2O. Its pathway is aromatic compound metabolism; 3,4-dihydroxybenzoate biosynthesis; 3,4-dihydroxybenzoate from 3-dehydroquinate: step 1/2. In terms of biological role, is involved in the catabolism of quinate. Allows the utilization of quinate as carbon source via the beta-ketoadipate pathway. The chain is Catabolic 3-dehydroquinase from Penicillium rubens (strain ATCC 28089 / DSM 1075 / NRRL 1951 / Wisconsin 54-1255) (Penicillium chrysogenum).